Here is a 56-residue protein sequence, read N- to C-terminus: Arcadin-3 (56 aa).

Its subcellular location is the cytoplasm. The protein resides in the cytoskeleton. In terms of biological role, part of an actin-like archaeal cytoskeleton. This is Arcadin-3 from Pyrobaculum calidifontis (strain DSM 21063 / JCM 11548 / VA1).